Reading from the N-terminus, the 166-residue chain is Large ribosomal subunit protein eL21 (166 aa).

The protein belongs to the eukaryotic ribosomal protein eL21 family. As to quaternary structure, component of the large ribosomal subunit.

It localises to the cytoplasm. It is found in the cytosol. The protein resides in the endoplasmic reticulum. Its function is as follows. Component of the large ribosomal subunit. The ribosome is a large ribonucleoprotein complex responsible for the synthesis of proteins in the cell. This chain is Large ribosomal subunit protein eL21 (RPL21), found in Entamoeba histolytica (strain ATCC 30459 / HM-1:IMSS / ABRM).